The following is a 702-amino-acid chain: Cytolytic toxin-alpha (702 aa).

The structural MACPF/CDC pore-forming domain stretch occupies residues 2 to 265; that stretch reads SSDIIMAGLG…KADLLVRDIS (264 aa). 5 N-linked (GlcNAc...) asparagine glycosylation sites follow: Asn-93, Asn-100, Asn-201, Asn-287, and Asn-311. Residues 266–385 form a structural FAT domain region; that stretch reads QGLVRKVHSI…DIIEETKHKA (120 aa). The interval 386–513 is thioredoxin (THX) domain; the sequence is VLSQSQMVKD…PIISAVEKIV (128 aa). The 198-residue stretch at 505–702 folds into the B30.2/SPRY domain; sequence IISAVEKIVD…RPYHGTVRLL (198 aa). Asn-530 is a glycosylation site (N-linked (GlcNAc...) asparagine).

Belongs to the SNTX/VTX toxin family. Heterodimer of alpha and beta subunits; non-covalently linked. Also associates into tetramers or even higher aggregates. Intrachain disulfide bonds may be present in the heterodimer. As to expression, expressed by the venom gland.

Its subcellular location is the secreted. In terms of biological role, this heterodimer induces potent hemolytic activities (when tested on rabbit erythrocytes, EC(50)=25-56 ng/mL) due to its ability to form pores in the cell membrane. The pore may be composed of 10 alpha/beta heterodimers. The toxin shows cardiovascular effects that include a vasorelaxant action that may involve the L-arginine-nitric oxid synthase pathway. In addition, it displays edema-inducing activities, increases vascular permeability. It also shows myotoxic activities and interferes irreversibly with neuromuscular function. It also induces irreversible platelet aggregation in rabbit or rat (but not in human or mouse) whole blood. In addition, it has been observed to increase spontaneous quantal acetylcholine release from isolated frog cutaneous pectoris motor endings. The protein is Cytolytic toxin-alpha of Scorpaena plumieri (Spotted scorpionfish).